The chain runs to 660 residues: Bifunctional polymyxin resistance protein ArnA (660 aa).

The interval 1 to 304 (MKTVVFAYHD…TLGLVQGSRL (304 aa)) is formyltransferase ArnAFT. 86 to 88 (HLI) contributes to the (6R)-10-formyltetrahydrofolate binding site. The Proton donor; for formyltransferase activity role is filled by His-104. (6R)-10-formyltetrahydrofolate is bound by residues Arg-114 and 136 to 140 (VKRAD). The dehydrogenase ArnADH stretch occupies residues 314 to 660 (RRTRVLILGV…RTVDLTDKPS (347 aa)). NAD(+) is bound by residues Asp-347 and 368–369 (DI). Residues Ala-393, Tyr-398, and 432–433 (TS) each bind UDP-alpha-D-glucuronate. Catalysis depends on Glu-434, which acts as the Proton acceptor; for decarboxylase activity. UDP-alpha-D-glucuronate is bound by residues Arg-460, Asn-492, 526–535 (KLIDGGKQKR), and Tyr-613. The Proton donor; for decarboxylase activity role is filled by Arg-619.

The protein in the N-terminal section; belongs to the Fmt family. UDP-L-Ara4N formyltransferase subfamily. In the C-terminal section; belongs to the NAD(P)-dependent epimerase/dehydratase family. UDP-glucuronic acid decarboxylase subfamily. As to quaternary structure, homohexamer, formed by a dimer of trimers.

It carries out the reaction UDP-alpha-D-glucuronate + NAD(+) = UDP-beta-L-threo-pentopyranos-4-ulose + CO2 + NADH. The catalysed reaction is UDP-4-amino-4-deoxy-beta-L-arabinose + (6R)-10-formyltetrahydrofolate = UDP-4-deoxy-4-formamido-beta-L-arabinose + (6S)-5,6,7,8-tetrahydrofolate + H(+). It functions in the pathway nucleotide-sugar biosynthesis; UDP-4-deoxy-4-formamido-beta-L-arabinose biosynthesis; UDP-4-deoxy-4-formamido-beta-L-arabinose from UDP-alpha-D-glucuronate: step 1/3. It participates in nucleotide-sugar biosynthesis; UDP-4-deoxy-4-formamido-beta-L-arabinose biosynthesis; UDP-4-deoxy-4-formamido-beta-L-arabinose from UDP-alpha-D-glucuronate: step 3/3. Its pathway is bacterial outer membrane biogenesis; lipopolysaccharide biosynthesis. Bifunctional enzyme that catalyzes the oxidative decarboxylation of UDP-glucuronic acid (UDP-GlcUA) to UDP-4-keto-arabinose (UDP-Ara4O) and the addition of a formyl group to UDP-4-amino-4-deoxy-L-arabinose (UDP-L-Ara4N) to form UDP-L-4-formamido-arabinose (UDP-L-Ara4FN). The modified arabinose is attached to lipid A and is required for resistance to polymyxin and cationic antimicrobial peptides. The protein is Bifunctional polymyxin resistance protein ArnA of Escherichia coli O9:H4 (strain HS).